We begin with the raw amino-acid sequence, 1304 residues long: Neuronal cell adhesion molecule (1304 aa).

The signal sequence occupies residues methionine 1 to cysteine 24. Residues glutamine 25–glutamine 1167 lie on the Extracellular side of the membrane. Ig-like domains follow at residues proline 46 to serine 134 and proline 141 to serine 235. 2 disulfide bridges follow: cysteine 68–cysteine 123 and cysteine 167–cysteine 218. N-linked (GlcNAc...) asparagine glycosylation is present at asparagine 83. N-linked (GlcNAc...) asparagine glycosylation is found at asparagine 223, asparagine 245, asparagine 251, asparagine 276, and asparagine 314. 4 consecutive Ig-like domains span residues proline 267 to arginine 356, proline 361 to asparagine 448, proline 454 to glutamate 541, and proline 545 to serine 632. Intrachain disulfides connect cysteine 292-cysteine 340 and cysteine 382-cysteine 432. N-linked (GlcNAc...) asparagine glycans are attached at residues asparagine 433 and asparagine 507. 2 disulfide bridges follow: cysteine 476-cysteine 525 and cysteine 567-cysteine 616. N-linked (GlcNAc...) asparagine glycans are attached at residues asparagine 619, asparagine 716, and asparagine 802. Fibronectin type-III domains lie at proline 649 to serine 744, proline 746 to aspartate 843, alanine 848 to glycine 950, alanine 954 to alanine 1051, and glutamine 1064 to alanine 1156. The N-linked (GlcNAc...) (complex) asparagine glycan is linked to asparagine 858. 6 N-linked (GlcNAc...) asparagine glycosylation sites follow: asparagine 993, asparagine 1009, asparagine 1019, asparagine 1072, asparagine 1083, and asparagine 1115. A helical membrane pass occupies residues glycine 1168–isoleucine 1190. The Cytoplasmic segment spans residues arginine 1191–valine 1304. Over residues proline 1199–aspartate 1219 the composition is skewed to basic and acidic residues. The tract at residues proline 1199 to valine 1304 is disordered. Threonine 1221 carries the post-translational modification Phosphothreonine. Tyrosine 1225 is subject to Phosphotyrosine. Serine 1226 is subject to Phosphoserine. The span at proline 1241–aspartate 1250 shows a compositional bias: basic and acidic residues. 6 positions are modified to phosphoserine: serine 1251, serine 1254, serine 1271, serine 1290, serine 1291, and serine 1295. The span at asparagine 1288–valine 1304 shows a compositional bias: polar residues.

It belongs to the immunoglobulin superfamily. L1/neurofascin/NgCAM family. Constituent of a NFASC/NRCAM/ankyrin-G complex. Detected in a complex with CNTN1 and PTPRB. Interacts with GLDN/gliomedin. Interacts with MYOC. In terms of tissue distribution, detected in all the examined tissues. In the brain it was detected in the amygdala, caudate nucleus, corpus callosum, hippocampus, hypothalamus, substantia nigra, subthalamic nucleus and thalamus.

The protein resides in the cell membrane. It is found in the cell projection. Its subcellular location is the axon. It localises to the secreted. In terms of biological role, cell adhesion protein that is required for normal responses to cell-cell contacts in brain and in the peripheral nervous system. Plays a role in neurite outgrowth in response to contactin binding. Plays a role in mediating cell-cell contacts between Schwann cells and axons. Plays a role in the formation and maintenance of the nodes of Ranvier on myelinated axons. Nodes of Ranvier contain clustered sodium channels that are crucial for the saltatory propagation of action potentials along myelinated axons. During development, nodes of Ranvier are formed by the fusion of two heminodes. Required for normal clustering of sodium channels at heminodes; not required for the formation of mature nodes with normal sodium channel clusters. Required, together with GLDN, for maintaining NFASC and sodium channel clusters at mature nodes of Ranvier. The chain is Neuronal cell adhesion molecule (NRCAM) from Homo sapiens (Human).